The chain runs to 262 residues: Small ribosomal subunit protein eS1 (262 aa).

Residues 235–253 (HGDGKGSDEPGAKVSRPEA) are compositionally biased toward basic and acidic residues. Residues 235–262 (HGDGKGSDEPGAKVSRPEAYEPPVQESV) form a disordered region.

The protein belongs to the eukaryotic ribosomal protein eS1 family. Component of the small ribosomal subunit. Mature ribosomes consist of a small (40S) and a large (60S) subunit. The 40S subunit contains about 33 different proteins and 1 molecule of RNA (18S). The 60S subunit contains about 49 different proteins and 3 molecules of RNA (28S, 5.8S and 5S).

The protein localises to the cytoplasm. The polypeptide is Small ribosomal subunit protein eS1 (Triatoma infestans (Assassin bug)).